A 320-amino-acid polypeptide reads, in one-letter code: Endolytic peptidoglycan transglycosylase RlpA (320 aa).

It belongs to the RlpA family.

Functionally, lytic transglycosylase with a strong preference for naked glycan strands that lack stem peptides. In Rickettsia prowazekii (strain Madrid E), this protein is Endolytic peptidoglycan transglycosylase RlpA.